A 376-amino-acid polypeptide reads, in one-letter code: Erythronate-4-phosphate dehydrogenase (376 aa).

Residues serine 45 and threonine 66 each coordinate substrate. NAD(+) is bound by residues 126-127, aspartate 146, threonine 174, 201-203, and aspartate 227; these read QV and ASR. Arginine 203 is a catalytic residue. Residue glutamate 232 is part of the active site. The Proton donor role is filled by histidine 249. Glycine 252 contributes to the NAD(+) binding site. Residue tyrosine 253 coordinates substrate.

It belongs to the D-isomer specific 2-hydroxyacid dehydrogenase family. PdxB subfamily. As to quaternary structure, homodimer.

It is found in the cytoplasm. It catalyses the reaction 4-phospho-D-erythronate + NAD(+) = (R)-3-hydroxy-2-oxo-4-phosphooxybutanoate + NADH + H(+). The protein operates within cofactor biosynthesis; pyridoxine 5'-phosphate biosynthesis; pyridoxine 5'-phosphate from D-erythrose 4-phosphate: step 2/5. Functionally, catalyzes the oxidation of erythronate-4-phosphate to 3-hydroxy-2-oxo-4-phosphonooxybutanoate. The chain is Erythronate-4-phosphate dehydrogenase from Ectopseudomonas mendocina (strain ymp) (Pseudomonas mendocina).